The sequence spans 271 residues: Thiazole synthase (271 aa).

Lys-95 serves as the catalytic Schiff-base intermediate with DXP. Residues Gly-156, 182–183, and 204–205 contribute to the 1-deoxy-D-xylulose 5-phosphate site; these read AG and NT.

Belongs to the ThiG family. In terms of assembly, homotetramer. Forms heterodimers with either ThiH or ThiS.

It localises to the cytoplasm. It carries out the reaction [ThiS sulfur-carrier protein]-C-terminal-Gly-aminoethanethioate + 2-iminoacetate + 1-deoxy-D-xylulose 5-phosphate = [ThiS sulfur-carrier protein]-C-terminal Gly-Gly + 2-[(2R,5Z)-2-carboxy-4-methylthiazol-5(2H)-ylidene]ethyl phosphate + 2 H2O + H(+). It functions in the pathway cofactor biosynthesis; thiamine diphosphate biosynthesis. In terms of biological role, catalyzes the rearrangement of 1-deoxy-D-xylulose 5-phosphate (DXP) to produce the thiazole phosphate moiety of thiamine. Sulfur is provided by the thiocarboxylate moiety of the carrier protein ThiS. In vitro, sulfur can be provided by H(2)S. The sequence is that of Thiazole synthase from Yersinia pseudotuberculosis serotype O:3 (strain YPIII).